We begin with the raw amino-acid sequence, 516 residues long: GMP synthase [glutamine-hydrolyzing] (516 aa).

In terms of domain architecture, Glutamine amidotransferase type-1 spans 8–198 (KILILDFGSQ…VVNICGCDTL (191 aa)). Cys-84 functions as the Nucleophile in the catalytic mechanism. Residues His-172 and Glu-174 contribute to the active site. The 193-residue stretch at 199–391 (WNIENIIEND…LGLPYNMLYR (193 aa)) folds into the GMPS ATP-PPase domain. 226–232 (SGGVDSS) contacts ATP.

As to quaternary structure, homodimer.

The enzyme catalyses XMP + L-glutamine + ATP + H2O = GMP + L-glutamate + AMP + diphosphate + 2 H(+). It functions in the pathway purine metabolism; GMP biosynthesis; GMP from XMP (L-Gln route): step 1/1. Functionally, catalyzes the synthesis of GMP from XMP. This chain is GMP synthase [glutamine-hydrolyzing], found in Francisella tularensis subsp. tularensis (strain FSC 198).